A 144-amino-acid polypeptide reads, in one-letter code: Probable subtilase-type protease inhibitor (144 aa).

Positions 1–34 are cleaved as a signal peptide; sequence MPNTARWAVTLTLTATAVCGPLAGASLATPNAAA. 2 disulfide bridges follow: cysteine 66/cysteine 81 and cysteine 102/cysteine 132.

Belongs to the protease inhibitor I16 (SSI) family. Homodimer.

It localises to the secreted. In terms of biological role, strong inhibitor of bacterial serine proteases such as subtilisin. This Streptomyces avermitilis (strain ATCC 31267 / DSM 46492 / JCM 5070 / NBRC 14893 / NCIMB 12804 / NRRL 8165 / MA-4680) protein is Probable subtilase-type protease inhibitor (sti1).